We begin with the raw amino-acid sequence, 116 residues long: MAPPSVPLVLLLVLLLSLAETPASAPAHRGRGGWTLNSAGYLLGPVLHLPQMGDQDGKRETALEILDLWKAIDGLPYSHPPQPSKRNVMETFAKPEIGDLGMLSMKIPKEEDVLKS.

The first 24 residues, 1-24 (MAPPSVPLVLLLVLLLSLAETPAS), serve as a signal peptide directing secretion. Residues 87–116 (NVMETFAKPEIGDLGMLSMKIPKEEDVLKS) constitute a propeptide that is removed on maturation.

The protein belongs to the galanin family. In terms of tissue distribution, isoform 2 is found in ganglia of ganglioneuroma and ganglioneuroblastoma, as well as in differentiated tumor cells of neuroblastoma tissues. Not found in undifferentiated neuroblasts. Isoform 2 is found in the skin, in pericytes covering microvascular arterioles and venules on their abluminal surfaces. In larger vessels, isoform 2 is expressed in layers of smooth muscle cells. Isoform 2 is not detected in endothelial cells.

The protein localises to the secreted. Functionally, hypothalamic neuropeptide which binds to the G-protein-coupled galanin receptors (GALR1, GALR2 and GALR3). Involved in a large number of putative physiological functions in CNS homeostatic processes, including the regulation of gonadotropin-releasing hormone secretion. Its function is as follows. Exhibits potent and dose-dependent vasoconstrictor and anti-edema activity in the cutaneous microvasculature, a physiologic effects which does not appear to be mediated via GALR1 or GALR2. Exhibits antimicrobial activity against Gram-negative bacterias, inducing bacterial membrane blebbing. The polypeptide is Galanin-like peptide (GALP) (Homo sapiens (Human)).